Consider the following 451-residue polypeptide: Trigger factor (451 aa).

Positions Asp165–Leu250 constitute a PPIase FKBP-type domain.

Belongs to the FKBP-type PPIase family. Tig subfamily.

It localises to the cytoplasm. The catalysed reaction is [protein]-peptidylproline (omega=180) = [protein]-peptidylproline (omega=0). Its function is as follows. Involved in protein export. Acts as a chaperone by maintaining the newly synthesized protein in an open conformation. Functions as a peptidyl-prolyl cis-trans isomerase. The chain is Trigger factor from Helicobacter pylori (strain Shi470).